Consider the following 237-residue polypeptide: tRNA1(Val) (adenine(37)-N6)-methyltransferase (237 aa).

This sequence belongs to the methyltransferase superfamily. tRNA (adenine-N(6)-)-methyltransferase family.

It localises to the cytoplasm. The enzyme catalyses adenosine(37) in tRNA1(Val) + S-adenosyl-L-methionine = N(6)-methyladenosine(37) in tRNA1(Val) + S-adenosyl-L-homocysteine + H(+). In terms of biological role, specifically methylates the adenine in position 37 of tRNA(1)(Val) (anticodon cmo5UAC). The polypeptide is tRNA1(Val) (adenine(37)-N6)-methyltransferase (Bacteroides fragilis (strain ATCC 25285 / DSM 2151 / CCUG 4856 / JCM 11019 / LMG 10263 / NCTC 9343 / Onslow / VPI 2553 / EN-2)).